The following is a 283-amino-acid chain: Pantothenate synthetase (283 aa).

An ATP-binding site is contributed by 30-37 (MGYLHEGH). Histidine 37 acts as the Proton donor in catalysis. Glutamine 61 serves as a coordination point for (R)-pantoate. Glutamine 61 is a binding site for beta-alanine. An ATP-binding site is contributed by 147–150 (GQKD). Residue glutamine 153 coordinates (R)-pantoate. Residues valine 176 and 184-187 (MSSR) contribute to the ATP site.

The protein belongs to the pantothenate synthetase family. As to quaternary structure, homodimer.

The protein resides in the cytoplasm. The catalysed reaction is (R)-pantoate + beta-alanine + ATP = (R)-pantothenate + AMP + diphosphate + H(+). Its pathway is cofactor biosynthesis; (R)-pantothenate biosynthesis; (R)-pantothenate from (R)-pantoate and beta-alanine: step 1/1. Functionally, catalyzes the condensation of pantoate with beta-alanine in an ATP-dependent reaction via a pantoyl-adenylate intermediate. The protein is Pantothenate synthetase of Thermoanaerobacter pseudethanolicus (strain ATCC 33223 / 39E) (Clostridium thermohydrosulfuricum).